We begin with the raw amino-acid sequence, 273 residues long: tRNA (guanine-N(7)-)-methyltransferase (273 aa).

G86, E109, R111, N142, A143, and L162 together coordinate S-adenosyl-L-methionine. The active site involves D165. The interval 166 to 174 (PHFKKTKHK) is alphaC helix. S-adenosyl-L-methionine is bound by residues T240 and E242. The interval 240-248 (TEEGKKVQR) is alpha6 helix.

Belongs to the class I-like SAM-binding methyltransferase superfamily. TrmB family. Catalytic component of the METTL1-WDR4 complex, composed of mettl1 and wdr4.

The protein resides in the nucleus. It catalyses the reaction guanosine(46) in tRNA + S-adenosyl-L-methionine = N(7)-methylguanosine(46) in tRNA + S-adenosyl-L-homocysteine. The enzyme catalyses a guanosine in mRNA + S-adenosyl-L-methionine = an N(7)-methylguanosine in mRNA + S-adenosyl-L-homocysteine. It carries out the reaction a guanosine in miRNA + S-adenosyl-L-methionine = an N(7)-methylguanosine in miRNA + S-adenosyl-L-homocysteine. Its pathway is tRNA modification; N(7)-methylguanine-tRNA biosynthesis. In terms of biological role, catalytic component of METTL1-WDR4 methyltransferase complex that mediates the formation of N(7)-methylguanine in a subset of RNA species, such as tRNAs, mRNAs and microRNAs (miRNAs). Catalyzes the formation of N(7)-methylguanine at position 46 (m7G46) in a large subset of tRNAs that contain the 5'-RAGGU-3' motif within the variable loop. M7G46 interacts with C13-G22 in the D-loop to stabilize tRNA tertiary structure and protect tRNAs from decay. Also acts as a methyltransferase for a subset of internal N(7)-methylguanine in mRNAs. Internal N(7)-methylguanine methylation of mRNAs in response to stress promotes their relocalization to stress granules, thereby suppressing their translation. Also methylates a specific subset of miRNAs. This is tRNA (guanine-N(7)-)-methyltransferase (mettl1) from Xenopus laevis (African clawed frog).